The sequence spans 572 residues: 2-isopropylmalate synthase (572 aa).

Residues Pro31 to Asn305 form the Pyruvate carboxyltransferase domain. Mg(2+) contacts are provided by Asp40, His244, His246, and Asn280. The tract at residues Asn437–Val572 is regulatory domain.

The protein belongs to the alpha-IPM synthase/homocitrate synthase family. LeuA type 2 subfamily. As to quaternary structure, homodimer. Requires Mg(2+) as cofactor.

The protein resides in the cytoplasm. It catalyses the reaction 3-methyl-2-oxobutanoate + acetyl-CoA + H2O = (2S)-2-isopropylmalate + CoA + H(+). The protein operates within amino-acid biosynthesis; L-leucine biosynthesis; L-leucine from 3-methyl-2-oxobutanoate: step 1/4. In terms of biological role, catalyzes the condensation of the acetyl group of acetyl-CoA with 3-methyl-2-oxobutanoate (2-ketoisovalerate) to form 3-carboxy-3-hydroxy-4-methylpentanoate (2-isopropylmalate). This chain is 2-isopropylmalate synthase, found in Paraburkholderia xenovorans (strain LB400).